A 312-amino-acid chain; its full sequence is Pantothenate kinase (312 aa).

An ATP-binding site is contributed by 92–99; it reads GSVAVGKS.

This sequence belongs to the prokaryotic pantothenate kinase family.

It is found in the cytoplasm. The enzyme catalyses (R)-pantothenate + ATP = (R)-4'-phosphopantothenate + ADP + H(+). It functions in the pathway cofactor biosynthesis; coenzyme A biosynthesis; CoA from (R)-pantothenate: step 1/5. This chain is Pantothenate kinase (coaA), found in Vibrio cholerae serotype O1 (strain ATCC 39315 / El Tor Inaba N16961).